The sequence spans 317 residues: tRNA pseudouridine synthase B (317 aa).

Asp47 acts as the Nucleophile in catalysis.

The protein belongs to the pseudouridine synthase TruB family. Type 1 subfamily.

The enzyme catalyses uridine(55) in tRNA = pseudouridine(55) in tRNA. Functionally, responsible for synthesis of pseudouridine from uracil-55 in the psi GC loop of transfer RNAs. The chain is tRNA pseudouridine synthase B from Shewanella frigidimarina (strain NCIMB 400).